The primary structure comprises 157 residues: Transcriptional regulator AzlB (157 aa).

The region spanning 5–66 (LDETDKAILR…IVDEKKLGIE (62 aa)) is the HTH asnC-type domain. The segment at residues 24 to 43 (NLNLSKKIGLSPSACLARTK) is a DNA-binding region (H-T-H motif).

In terms of biological role, transcriptional repressor of the azlBCD operon involved in branched-chain amino acid transport. This is Transcriptional regulator AzlB (azlB) from Bacillus subtilis (strain 168).